Reading from the N-terminus, the 78-residue chain is Acyl carrier protein 1 (78 aa).

Residues 2 to 77 (STIEERVKKI…EAIDYIVAHQ (76 aa)) form the Carrier domain. O-(pantetheine 4'-phosphoryl)serine is present on S37.

It belongs to the acyl carrier protein (ACP) family. Post-translationally, 4'-phosphopantetheine is transferred from CoA to a specific serine of apo-ACP by AcpS. This modification is essential for activity because fatty acids are bound in thioester linkage to the sulfhydryl of the prosthetic group.

It localises to the cytoplasm. The protein operates within lipid metabolism; fatty acid biosynthesis. Functionally, carrier of the growing fatty acid chain in fatty acid biosynthesis. In Pseudomonas aeruginosa (strain ATCC 15692 / DSM 22644 / CIP 104116 / JCM 14847 / LMG 12228 / 1C / PRS 101 / PAO1), this protein is Acyl carrier protein 1.